The chain runs to 701 residues: Polyribonucleotide nucleotidyltransferase (701 aa).

The Mg(2+) site is built by Asp-487 and Asp-493. The KH domain occupies Pro-554 to Ile-613. One can recognise an S1 motif domain in the interval Gly-623 to Lys-691.

Belongs to the polyribonucleotide nucleotidyltransferase family. In terms of assembly, component of the RNA degradosome, which is a multiprotein complex involved in RNA processing and mRNA degradation. Requires Mg(2+) as cofactor.

The protein resides in the cytoplasm. The catalysed reaction is RNA(n+1) + phosphate = RNA(n) + a ribonucleoside 5'-diphosphate. Involved in mRNA degradation. Catalyzes the phosphorolysis of single-stranded polyribonucleotides processively in the 3'- to 5'-direction. This chain is Polyribonucleotide nucleotidyltransferase, found in Pseudomonas entomophila (strain L48).